Here is a 338-residue protein sequence, read N- to C-terminus: Aspartate-semialdehyde dehydrogenase (338 aa).

NADP(+) is bound by residues 13–16 (TGNV) and 41–42 (NS). Residue R101 participates in phosphate binding. Residue C132 is the Acyl-thioester intermediate of the active site. Q159 provides a ligand contact to substrate. Position 162–163 (162–163 (SG)) interacts with NADP(+). Residue K216 coordinates phosphate. R237 is a binding site for substrate. H244 acts as the Proton acceptor in catalysis. An NADP(+)-binding site is contributed by N317.

The protein belongs to the aspartate-semialdehyde dehydrogenase family. Homodimer.

It catalyses the reaction L-aspartate 4-semialdehyde + phosphate + NADP(+) = 4-phospho-L-aspartate + NADPH + H(+). The protein operates within amino-acid biosynthesis; L-lysine biosynthesis via DAP pathway; (S)-tetrahydrodipicolinate from L-aspartate: step 2/4. Its pathway is amino-acid biosynthesis; L-methionine biosynthesis via de novo pathway; L-homoserine from L-aspartate: step 2/3. It participates in amino-acid biosynthesis; L-threonine biosynthesis; L-threonine from L-aspartate: step 2/5. In terms of biological role, catalyzes the NADPH-dependent formation of L-aspartate-semialdehyde (L-ASA) by the reductive dephosphorylation of L-aspartyl-4-phosphate. The chain is Aspartate-semialdehyde dehydrogenase from Rickettsia bellii (strain RML369-C).